The chain runs to 7067 residues: Replicase polyprotein 1ab (7067 aa).

Residues 12–127 (THVQLSLPVL…YRNVLLRKNG (116 aa)) form the CoV Nsp1 globular domain. One can recognise a BetaCoV Nsp1 C-terminal domain in the interval 148–179 (ELGTDPIEDYEQNWNTKHGSGALRELTRELNG). Positions 183–456 (TRYVDNNFCG…NEDLLEILNR (274 aa)) constitute a CoV Nsp2 N-terminal domain. Zn(2+) is bound by residues C200, C231, H234, H236, C323, C326, C341, C344, C370, C373, H382, and C416. The tract at residues 200–236 (CIKDFLARAGKSMCTLSEQLDYIESKRGVYCCREHEH) is C2H2. The tract at residues 323–344 (CNHCDEVSWQTCDFLKATCEQC) is C4. Positions 370–416 (CPACQDPEVGPEHSVADYHNHSNIETRLRKGGRTKCFGGCVFSYVGC) are C2HC. Residues 458 to 688 (RVNINIVGDF…LGVVNKALEM (231 aa)) enclose the CoV Nsp2 middle domain. Residues 690 to 818 (LDQVTIAGTK…TNNVFRLKGG (129 aa)) form the CoV Nsp2 C-terminal domain. Positions 822-930 (KGVTFGEDTV…MYCSFYPPDE (109 aa)) constitute a Ubiquitin-like 1 domain. 3 Macro domains span residues 998-1164 (VNQF…LDYL), 1201-1329 (KIKA…LPSE), and 1337-1464 (VLGT…TSSS). The DPUP domain maps to 1466–1532 (TPEEYFVETT…PLDKLKSLLS (67 aa)). Residues 1536–1591 (VKTIKVFTTVDNTNLHTHIVDMSMTYGQQFGPTYLDGADVTKIKPHVNHEGKTFFV) enclose the Ubiquitin-like 2 domain. In terms of domain architecture, Peptidase C16 spans 1605–1869 (YYHTIDESFL…YTEIEPKLDG (265 aa)). C1645 functions as the For PL-PRO activity in the catalytic mechanism. C1723, C1726, C1758, and C1760 together coordinate Zn(2+). A C4-type zinc finger spans residues 1723–1760 (CKHCGQKTTTLKGVEAVMYMGTLSYDELKTGVSIPCVC). Active-site for PL-PRO activity residues include H1806 and D1820. Residues 1882 to 1992 (PIDLVPTQPM…CLWSTKPVDT (111 aa)) form the Nucleic acid-binding domain. The region spanning 2017-2126 (TTSEEVVENP…LGQTAVITSN (110 aa)) is the G2M domain. The HD1 stretch occupies residues 2086–2365 (LALGLKTLAT…IFFASFYYVW (280 aa)). Residues 2197–2217 (LFTIVMWLLLLSICLGSLTYV) traverse the membrane as a helical segment. One can recognise a 3Ecto domain in the interval 2218-2288 (TAVLGVCLSS…QVTISSYKLD (71 aa)). 2 disulfides stabilise this stretch: C2234-C2262 and C2253-C2259. Transmembrane regions (helical) follow at residues 2298–2318 (WLLA…SAIM) and 2345–2365 (MAPV…YYVW). Residues 2366–2456 (KSYVHIMDGC…QFKRPINPTD (91 aa)) are Y1. The 369-residue stretch at 2366 to 2734 (KSYVHIMDGC…ITTKISLKGG (369 aa)) folds into the CoV Nsp3 Y domain. 8 residues coordinate Zn(2+): H2370, C2375, C2380, C2383, C2416, H2419, C2423, and C2426. The segment at 2370 to 2383 (HIMDGCTSSTCMMC) is ZF1. The ZF2 stretch occupies residues 2416-2426 (CKAHNWNCLNC). A Y2 region spans residues 2457–2551 (QSAYVVDSVT…LLDQALVSDV (95 aa)). Residues 2457 to 2734 (QSAYVVDSVT…ITTKISLKGG (278 aa)) form a coV-Y region. Residues 2552–2633 (GDSTEVSVKM…ECLKLSHHSD (82 aa)) form a Y3 region. The Y4 stretch occupies residues 2634–2734 (IEVTGDSCNN…ITTKISLKGG (101 aa)). The next 7 helical transmembrane spans lie at 2744-2764 (LLKV…IMPV), 2986-3006 (PGVF…TPLV), 3016-3036 (ASVV…YYFM), 3048-3068 (VVAA…LAPA), 3071-3091 (FLPG…TNDV), 3099-3119 (WFAM…VFCI), and 3136-3156 (VMFN…TFLL). The interval 2749–3156 (LLCVLAALFC…EEAALCTFLL (408 aa)) is HD2. Positions 3136 to 3234 (VMFNGVTFST…QTSITSAVLQ (99 aa)) constitute a Nsp4C domain. A Peptidase C30 domain is found at 3235–3540 (SGFRKMAFPS…VRQCSGVTFQ (306 aa)). Residues H3275 and C3379 each act as for 3CL-PRO activity in the active site. 7 helical membrane passes run 3558 to 3578 (FLTS…FFVY), 3580 to 3600 (NAFL…MLLV), 3606 to 3626 (FLCL…MVYM), 3652 to 3672 (DCVM…RTVY), 3679 to 3698 (VWTL…GNSL), 3722 to 3742 (IMFL…LLFI), and 3750 to 3770 (IMLV…LFCL). Residues 3558-3770 (FLTSLLILVQ…CCCYFGLFCL (213 aa)) form an HD3 region. The RdRp Nsp7 cofactor domain occupies 3831–3913 (SKMSDVKCTS…EMLDNRATLQ (83 aa)). One can recognise a RdRp Nsp8 cofactor domain in the interval 3914–4111 (AIASEFSSLP…LRANSAVKLQ (198 aa)). The 113-residue stretch at 4112 to 4224 (NNELSPVALR…GSLAATVRLQ (113 aa)) folds into the Nsp9 ssRNA-binding domain. The 139-residue stretch at 4225–4363 (AGNATEVPAN…CDQLREPMMQ (139 aa)) folds into the ExoN/MTase coactivator domain. C4298, C4301, H4307, C4314, C4341, C4344, C4352, and C4354 together coordinate Zn(2+). Zinc fingers lie at residues 4298–4314 (CLYC…KGFC) and 4341–4354 (CTVC…GCSC). The NiRAN domain occupies 4370–4624 (FLNRVCGVSA…AAESHMDADL (255 aa)). Mn(2+) is bound by residues N4572 and D4581. A Nsp12 Interface domain is found at 4629-4727 (VKWDLLKYDF…HNQDVNLHSS (99 aa)). Zn(2+) contacts are provided by H4658, C4664, C4669, C4673, and C4850. In terms of domain architecture, Nsp12 RNA-dependent RNA polymerase spans 4728-5295 (RLSFKELLVY…AMYTPHTVLQ (568 aa)). The interval 4730–4944 (SFKELLVYAA…HQKLLKSIAA (215 aa)) is rdRp Fingers N-ter. The segment at 4945–4983 (TRGATVVIGTSKFYGGWHNMLKTVYSDVESPHLMGWDYP) is rdRp Palm N-ter. The RdRp catalytic domain maps to 4975-5137 (PHLMGWDYPK…CYNSNYAAQG (163 aa)). Positions 4984-5042 (KCDRAMPNMLRIMASLILARKHSTCCNLSHRFYRLANECAQVLSEMVMCGGSLYVKPGG) are rdRp Fingers C-ter. Zn(2+) is bound by residues H5005, C5008, and C5009. Positions 5043–5178 (TSSGDATTAY…TRGPHEFCSQ (136 aa)) are rdRp Palm C-ter. Catalysis depends on residues S5122, D5123, and D5124. The rdRp Thumb stretch occupies residues 5179 to 5295 (HTMLVKQGDD…AMYTPHTVLQ (117 aa)). In terms of domain architecture, CV ZBD spans 5296–5408 (AVGACVLCNS…TDFNAIATCD (113 aa)). Zn(2+) contacts are provided by C5300, C5303, C5311, C5314, C5321, C5324, H5328, H5334, C5345, C5350, C5367, and H5370. The 182-residue stretch at 5552-5733 (NISNEFSSNV…MKTIGPDMFL (182 aa)) folds into the (+)RNA virus helicase ATP-binding domain. Residue 5577–5584 (GPPGTGKS) coordinates ATP. The (+)RNA virus helicase C-terminal domain maps to 5734-5903 (GTCRRCPAEI…TLQAENVTGL (170 aa)). One can recognise an ExoN domain in the interval 5968–6183 (MFITREEAIR…RCLAVHECFV (216 aa)). Residues D5986, E5988, and E6087 contribute to the active site. Zn(2+) is bound by residues C6103, C6106, C6122, H6125, H6153, C6157, and H6160. Catalysis depends on residues H6164 and D6169. C6175 lines the Zn(2+) pocket. The N7-MTase domain occupies 6192–6423 (YPIIGDELKI…NLWNTFTKLQ (232 aa)). An S-adenosyl-L-methionine-binding site is contributed by 6227–6233 (DIGNPKA). A gpppA-binding region spans residues 6310-6324 (CDGGSLYVNKHAFHT). The Zn(2+) site is built by C6348, C6369, C6380, and H6383. The 61-residue stretch at 6424–6484 (SLENVAYNVV…NVAFELWAKR (61 aa)) folds into the Nsp15 N-terminal oligomerization domain. The AV-Nsp11N/CoV-Nsp15M domain occupies 6485-6610 (NIKPVPEIKI…YFKKVDGIIQ (126 aa)). A NendoU domain is found at 6627–6766 (KPRSQMETDF…KDGHVETFYP (140 aa)). Residues H6657, H6672, K6712, K6815, D6899, K6939, and E6972 contribute to the active site. Positions 6771–7065 (SQAWQPGVAM…RVVVSSDILV (295 aa)) constitute a Nidovirus-type SAM-dependent 2'-O-MTase domain.

The protein belongs to the coronaviruses polyprotein 1ab family. Interacts with host PHB and PHB2. In terms of assembly, interacts with papain-like protease nsp3 and non-structural protein 6. As to quaternary structure, monomer. Homodimer. Only the homodimer shows catalytic activity. Interacts with nsp8 and nsp12 to form the replication-transcription complex (RTC): nsp12, nsp7, two subunits of nsp8, and up to two subunits of nsp13. In terms of assembly, interacts with nsp7, nsp13 and nsp12 to form the replication-transcription complex (RTC): nsp12, nsp7, two subunits of nsp8, and up to two subunits of nsp13. As to quaternary structure, interacts with nsp12. Interacts with proofreading exoribonuclease nsp14 and 2'-O-methyltransferase nsp16; these interactions enhance nsp14 and nsp16 enzymatic activities. In terms of assembly, interacts with nsp7 and nsp8 to form the replication-transcription complex (RTC): nsp12, nsp7, two subunits of nsp8, and up to two subunits of nsp13. Interacts with nsp9. As to quaternary structure, interacts with nsp8 to form the replication-transcription complex (RTC): nsp12, nsp7, two subunits of nsp8, and up to two subunits of nsp13. Mn(2+) serves as cofactor. It depends on Mg(2+) as a cofactor. In terms of processing, specific enzymatic cleavages in vivo by its own proteases yield mature proteins. 3CL-PRO and PL-PRO proteinases are autocatalytically processed.

Its subcellular location is the host membrane. It localises to the host cytoplasm. It is found in the host perinuclear region. The protein localises to the host endoplasmic reticulum-Golgi intermediate compartment. The enzyme catalyses RNA(n) + a ribonucleoside 5'-triphosphate = RNA(n+1) + diphosphate. It catalyses the reaction ATP + H2O = ADP + phosphate + H(+). The catalysed reaction is Thiol-dependent hydrolysis of ester, thioester, amide, peptide and isopeptide bonds formed by the C-terminal Gly of ubiquitin (a 76-residue protein attached to proteins as an intracellular targeting signal).. It carries out the reaction a 5'-end (N(7)-methyl 5'-triphosphoguanosine)-ribonucleoside in mRNA + S-adenosyl-L-methionine = a 5'-end (N(7)-methyl 5'-triphosphoguanosine)-(2'-O-methyl-ribonucleoside) in mRNA + S-adenosyl-L-homocysteine + H(+). The enzyme catalyses uridylyl-uridylyl-ribonucleotide-RNA = a 3'-end uridylyl-2',3'-cyclophospho-uridine-RNA + a 5'-end dephospho-ribonucleoside-RNA. It catalyses the reaction a 5'-end diphospho-ribonucleoside in mRNA + GTP + H(+) = a 5'-end (5'-triphosphoguanosine)-ribonucleoside in mRNA + diphosphate. The catalysed reaction is a 5'-end (5'-triphosphoguanosine)-ribonucleoside in mRNA + S-adenosyl-L-methionine = a 5'-end (N(7)-methyl 5'-triphosphoguanosine)-ribonucleoside in mRNA + S-adenosyl-L-homocysteine. The replicase polyprotein of coronaviruses is a multifunctional protein: it contains the activities necessary for the transcription of negative stranded RNA, leader RNA, subgenomic mRNAs and progeny virion RNA as well as proteinases responsible for the cleavage of the polyprotein into functional products. Its function is as follows. Inhibits host translation by interacting with the 40S ribosomal subunit. The nsp1-40S ribosome complex further induces an endonucleolytic cleavage near the 5'UTR of host mRNAs, targeting them for degradation. Viral mRNAs are not susceptible to nsp1-mediated endonucleolytic RNA cleavage thanks to the presence of a 5'-end leader sequence and are therefore protected from degradation. By suppressing host gene expression, nsp1 facilitates efficient viral gene expression in infected cells and evasion from host immune response. In terms of biological role, may play a role in the modulation of host cell survival signaling pathway by interacting with host PHB and PHB2. Indeed, these two proteins play a role in maintaining the functional integrity of the mitochondria and protecting cells from various stresses. Functionally, responsible for the cleavages located at the N-terminus of the replicase polyprotein. In addition, PL-PRO possesses a deubiquitinating/deISGylating activity and processes both 'Lys-48'- and 'Lys-63'-linked polyubiquitin chains from cellular substrates. Participates together with nsp4 in the assembly of virally-induced cytoplasmic double-membrane vesicles necessary for viral replication. Antagonizes innate immune induction of type I interferon by blocking the phosphorylation, dimerization and subsequent nuclear translocation of host IRF3. Also prevents host NF-kappa-B signaling. Participates in the assembly of virally-induced cytoplasmic double-membrane vesicles necessary for viral replication. Its function is as follows. Cleaves the C-terminus of replicase polyprotein at 11 sites. Recognizes substrates containing the core sequence [ILMVF]-Q-|-[SGACN]. Also able to bind an ADP-ribose-1''-phosphate (ADRP). In terms of biological role, plays a role in the initial induction of autophagosomes from host endoplasmic reticulum. Later, limits the expansion of these phagosomes that are no longer able to deliver viral components to lysosomes. Functionally, forms a hexadecamer with nsp8 (8 subunits of each) that may participate in viral replication by acting as a primase. Alternatively, may synthesize substantially longer products than oligonucleotide primers. Forms a hexadecamer with nsp7 (8 subunits of each) that may participate in viral replication by acting as a primase. Alternatively, may synthesize substantially longer products than oligonucleotide primers. Its function is as follows. Forms a primer, NSP9-pU, which is utilized by the polymerase for the initiation of RNA chains. Interacts with ribosome signal recognition particle RNA (SRP). Together with NSP8, suppress protein integration into the cell membrane, thereby disrupting host immune defenses. In terms of biological role, plays a pivotal role in viral transcription by stimulating both nsp14 3'-5' exoribonuclease and nsp16 2'-O-methyltransferase activities. Therefore plays an essential role in viral mRNAs cap methylation. Functionally, RNA-directed RNA polymerase that catalyzes the transcription of viral genomic and subgenomic RNAs. Acts in complex with nsp7 and nsp8 to transcribe both the minus and positive strands of genomic RNA. The kinase-like NiRAN domain of NSP12 attaches one or more nucleotides to the amino terminus of NSP9, forming a covalent RNA-protein intermediate that serves as transcription/replication primer. Subgenomic RNAs (sgRNAs) are formed by discontinuous transcription: The polymerase has the ability to pause at transcription-regulating sequences (TRS) and jump to the leader TRS, resulting in a major deletion. This creates a series of subgenomic RNAs that are replicated, transcribed and translated. In addition, Nsp12 is a subunit of the viral RNA capping enzyme that catalyzes the RNA guanylyltransferase reaction for genomic and sub-genomic RNAs. Subsequently, the NiRAN domain transfers RNA to GDP, and forms the core cap structure GpppA-RNA. Multi-functional protein with a zinc-binding domain in N-terminus displaying RNA and DNA duplex-unwinding activities with 5' to 3' polarity. Activity of helicase is dependent on magnesium. Its function is as follows. Plays a role in viral RNA synthesis through two distinct activities. The N7-guanine methyltransferase activity plays a role in the formation of the cap structure GpppA-RNA. The proofreading exoribonuclease reduces the sensitivity of the virus to RNA mutagens during replication. This activity acts on both ssRNA and dsRNA in a 3'-5' direction. In terms of biological role, plays a role in viral transcription/replication and prevents the simultaneous activation of host cell dsRNA sensors, such as MDA5/IFIH1, OAS, and PKR. Acts by degrading the 5'-polyuridines generated during replication of the poly(A) region of viral genomic and subgenomic RNAs. Catalyzes a two-step reaction in which a 2'3'-cyclic phosphate (2'3'-cP) is first generated by 2'-O transesterification, which is then hydrolyzed to a 3'-phosphate (3'-P). If not degraded, poly(U) RNA would hybridize with poly(A) RNA tails and activate host dsRNA sensors. Functionally, methyltransferase that mediates mRNA cap 2'-O-ribose methylation to the 5'-cap structure of viral mRNAs. N7-methyl guanosine cap is a prerequisite for binding of nsp16. Therefore plays an essential role in viral mRNAs cap methylation which is essential to evade immune system. The protein is Replicase polyprotein 1ab (rep) of Bat coronavirus HKU3 (BtCoV).